The sequence spans 177 residues: uncharacterized protein (177 aa).

A disordered region spans residues Met-1 to Gly-27.

This is an uncharacterized protein from Homo sapiens (Human).